The sequence spans 142 residues: Galectin-16 (142 aa).

In terms of domain architecture, Galectin spans 6–138 (VPYKLPVSLS…DVSLDSVLVN (133 aa)).

Predominantly and highly expressed in the placenta where it is localized mainly in the syncytiotrophoblast and in the endothelia of fetal vessels. Also detected in the amnion and chorionic trophoblasts in fetal membranes.

In terms of biological role, binds lactose with high affinity. Strong inducer of T-cell apoptosis. The chain is Galectin-16 from Homo sapiens (Human).